Consider the following 250-residue polypeptide: 23S rRNA (guanine(2535)-N(1))-methyltransferase (250 aa).

The enzyme catalyses guanosine(2535) in 23S rRNA + S-adenosyl-L-methionine = N(1)-methylguanosine(2535) in 23S rRNA + S-adenosyl-L-homocysteine + H(+). Specifically methylates the guanine-2535 in 23S ribosomal RNA. Confers resistance to antibiotic avilamycin, an orthosomycin antibiotic. The polypeptide is 23S rRNA (guanine(2535)-N(1))-methyltransferase (aviRa) (Streptomyces viridochromogenes).